The primary structure comprises 365 residues: S-adenosylmethionine:tRNA ribosyltransferase-isomerase (365 aa).

Belongs to the QueA family. As to quaternary structure, monomer.

Its subcellular location is the cytoplasm. The catalysed reaction is 7-aminomethyl-7-carbaguanosine(34) in tRNA + S-adenosyl-L-methionine = epoxyqueuosine(34) in tRNA + adenine + L-methionine + 2 H(+). The protein operates within tRNA modification; tRNA-queuosine biosynthesis. Transfers and isomerizes the ribose moiety from AdoMet to the 7-aminomethyl group of 7-deazaguanine (preQ1-tRNA) to give epoxyqueuosine (oQ-tRNA). This Rickettsia rickettsii (strain Iowa) protein is S-adenosylmethionine:tRNA ribosyltransferase-isomerase.